The primary structure comprises 573 residues: MEEEQDLPEQPVKKAKMQESGEQTISQVSNPDVSDQKPETSSLASNLPMSEEIMTCTDYIPRSSNDYTSQMYSAKPYAHILSVPVSETAYPGQTQYQTLQQTQPYAVYPQATQTYGLPPFGALWPGMKPESGLIQTPSPSQHSVLTCTTGLTTSQPSPAHYSYPIQASSTNASLISTSSTIANIPAAAVASISNQDYPTYTILGQNQYQACYPSSSFGVTGQTNSDAESTTLAATTYQSEKPSVMAPAPAAQRLSSGDPSTSPSLSQTTPSKDTDDQSRKNMTSKNRGKRKADATSSQDSELERVFLWDLDETIIIFHSLLTGSYAQKYGKDPTVVIGSGLTMEEMIFEVADTHLFFNDLEECDQVHVEDVASDDNGQDLSNYSFSTDGFSGSGGSGSHGSSVGVQGGVDWMRKLAFRYRKVREIYDKHKSNVGGLLSPQRKEALQRLRAEIEVLTDSWLGTALKSLLLIQSRKNCVNVLITTTQLVPALAKVLLYGLGEIFPIENIYSATKIGKESCFERIVSRFGKKVTYVVIGDGRDEEIAAKQHNMPFWRITNHGDLVSLHQALELDFL.

Position 1 is an N-acetylmethionine (methionine 1). Disordered stretches follow at residues 1–46 and 236–296; these read MEEE…LASN and TYQS…DATS. Residues 20–46 are compositionally biased toward polar residues; the sequence is SGEQTISQVSNPDVSDQKPETSSLASN. Residues 254 to 271 show a composition bias toward low complexity; it reads LSSGDPSTSPSLSQTTPS. Phosphoserine is present on residues serine 262 and serine 266. The active-site Nucleophile is the aspartate 309. 2 residues coordinate Mg(2+): aspartate 309 and aspartate 311. Aspartate 311 acts as the Proton donor in catalysis. Phosphoserine occurs at positions 438 and 472. Mg(2+) is bound at residue aspartate 537.

The protein belongs to the HAD-like hydrolase superfamily. EYA family. As to quaternary structure, interacts with SIX1 and DACH1, and probably SIX2, SIX4, SIX5. The cofactor is Mg(2+). Ser-266 phosphorylation is required for localization at sites of DNA damage and directing interaction with H2AX.

Its subcellular location is the cytoplasm. The protein localises to the nucleus. The catalysed reaction is O-phospho-L-tyrosyl-[protein] + H2O = L-tyrosyl-[protein] + phosphate. Functionally, tyrosine phosphatase that specifically dephosphorylates 'Tyr-142' of histone H2AX (H2AXY142ph). 'Tyr-142' phosphorylation of histone H2AX plays a central role in DNA repair and acts as a mark that distinguishes between apoptotic and repair responses to genotoxic stress. Promotes efficient DNA repair by dephosphorylating H2AX, promoting the recruitment of DNA repair complexes containing MDC1. Its function as histone phosphatase probably explains its role in transcription regulation during organogenesis. Coactivates SIX1, and seems to coactivate SIX2, SIX4 and SIX5. The repression of precursor cell proliferation in myoblasts by SIX1 is switched to activation through recruitment of EYA3 to the SIX1-DACH1 complex and seems to be dependent on EYA3 phosphatase activity. May be involved in development of the eye. The protein is Protein phosphatase EYA3 (EYA3) of Homo sapiens (Human).